A 181-amino-acid polypeptide reads, in one-letter code: Acireductone dioxygenase (181 aa).

Fe(2+) is bound by residues His-97, His-99, Glu-103, and His-141. Residues His-97, His-99, Glu-103, and His-141 each contribute to the Ni(2+) site.

The protein belongs to the acireductone dioxygenase (ARD) family. Monomer. Requires Fe(2+) as cofactor. The cofactor is Ni(2+).

The catalysed reaction is 1,2-dihydroxy-5-(methylsulfanyl)pent-1-en-3-one + O2 = 3-(methylsulfanyl)propanoate + CO + formate + 2 H(+). It carries out the reaction 1,2-dihydroxy-5-(methylsulfanyl)pent-1-en-3-one + O2 = 4-methylsulfanyl-2-oxobutanoate + formate + 2 H(+). The protein operates within amino-acid biosynthesis; L-methionine biosynthesis via salvage pathway; L-methionine from S-methyl-5-thio-alpha-D-ribose 1-phosphate: step 5/6. Its function is as follows. Catalyzes 2 different reactions between oxygen and the acireductone 1,2-dihydroxy-3-keto-5-methylthiopentene (DHK-MTPene) depending upon the metal bound in the active site. Fe-containing acireductone dioxygenase (Fe-ARD) produces formate and 2-keto-4-methylthiobutyrate (KMTB), the alpha-ketoacid precursor of methionine in the methionine recycle pathway. Ni-containing acireductone dioxygenase (Ni-ARD) produces methylthiopropionate, carbon monoxide and formate, and does not lie on the methionine recycle pathway. This is Acireductone dioxygenase from Pseudomonas aeruginosa (strain UCBPP-PA14).